Consider the following 495-residue polypeptide: Cytochrome P450 monooxygenase aneF (495 aa).

Residues Met1 to His21 traverse the membrane as a helical segment. Asn47 carries an N-linked (GlcNAc...) asparagine glycan. A heme-binding site is contributed by Cys437.

This sequence belongs to the cytochrome P450 family. Requires heme as cofactor.

The protein localises to the membrane. The enzyme catalyses dauca-4,7-diene + 3 reduced [NADPH--hemoprotein reductase] + 3 O2 = asperaculane D + 3 oxidized [NADPH--hemoprotein reductase] + 4 H2O + 4 H(+). Its pathway is secondary metabolite biosynthesis. In terms of biological role, cytochrome P450 monooxygenase; part of the gene cluster that mediates the biosynthesis of aculenes, a unique type of norsesquiterpenes that contain a nordaucane skeleton linked to an L-proline moiety and are of mixed biosynthetic origin. The pathway begins with the synthesis of dauca-4,7-diene by the terpene cyclase aneC using farnesyl pyrophosphate (FPP) as substrate. The cytochrome P450 monooxygenase aneF then performs the initial oxidation at C-12 of dauca-4,7-diene to yield asperaculane D. Asperaculane D is substrate of the cytochrome P450 monooxygenase aneD for C-10 hydroxylation to yield asperaculane E. The cytochrome P450 monooxygenase aneG then converts asperaculane E into aculene D via C-2 oxidation. The monomodular nonribosomal peptide synthtase aneB adenylates L-proline and the thiohydrolase aneE transfers this activated L-proline derivative to aculenes D and C to produce respectively aculenes B and A. The dioxygenase aneA converts aculene D into aculene C, and aculene B into aculene A by introducing the 5,6-alkene moiety. Asperculanes A, B, C and F, as well as 14-prolyl asperculane C, might be shunt products of the pathway. The protein is Cytochrome P450 monooxygenase aneF of Aspergillus aculeatus (strain ATCC 16872 / CBS 172.66 / WB 5094).